Reading from the N-terminus, the 292-residue chain is 4-hydroxybenzoate octaprenyltransferase (292 aa).

8 helical membrane passes run 20 to 40, 43 to 63, 94 to 114, 135 to 155, 160 to 180, 209 to 229, 234 to 254, and 266 to 286; these read IGILLLLWPTLWGLWLAADGM, PMILVIFILGTILMRSAGCAI, LLIAAGLSLCAFLLILPLNLL, FFAMPQAYLGIAFSFGIPMAF, GTVPPLAWLLVLANLFWVIAY, VAGILLCHIIFLSTLTYAGIL, IWFYGALLVALGLVIVQYGMI, and FLHNNWIGAVIFAGILLDTLF.

The protein belongs to the UbiA prenyltransferase family. Mg(2+) is required as a cofactor.

It is found in the cell inner membrane. It carries out the reaction all-trans-octaprenyl diphosphate + 4-hydroxybenzoate = 4-hydroxy-3-(all-trans-octaprenyl)benzoate + diphosphate. Its pathway is cofactor biosynthesis; ubiquinone biosynthesis. Catalyzes the prenylation of para-hydroxybenzoate (PHB) with an all-trans polyprenyl group. Mediates the second step in the final reaction sequence of ubiquinone-8 (UQ-8) biosynthesis, which is the condensation of the polyisoprenoid side chain with PHB, generating the first membrane-bound Q intermediate 3-octaprenyl-4-hydroxybenzoate. The polypeptide is 4-hydroxybenzoate octaprenyltransferase (Nitrosomonas europaea (strain ATCC 19718 / CIP 103999 / KCTC 2705 / NBRC 14298)).